We begin with the raw amino-acid sequence, 255 residues long: Aliphatic sulfonates import ATP-binding protein SsuB (255 aa).

Positions 12–233 (LLLNAVSKHY…RLGSVRLAEL (222 aa)) constitute an ABC transporter domain. Position 44–51 (44–51 (GRSGGGKS)) interacts with ATP.

This sequence belongs to the ABC transporter superfamily. Aliphatic sulfonates importer (TC 3.A.1.17.2) family. As to quaternary structure, the complex is composed of two ATP-binding proteins (SsuB), two transmembrane proteins (SsuC) and a solute-binding protein (SsuA).

The protein resides in the cell inner membrane. It carries out the reaction ATP + H2O + aliphatic sulfonate-[sulfonate-binding protein]Side 1 = ADP + phosphate + aliphatic sulfonateSide 2 + [sulfonate-binding protein]Side 1.. Part of the ABC transporter complex SsuABC involved in aliphatic sulfonates import. Responsible for energy coupling to the transport system. This is Aliphatic sulfonates import ATP-binding protein SsuB from Escherichia coli O6:K15:H31 (strain 536 / UPEC).